Here is a 417-residue protein sequence, read N- to C-terminus: Serine hydroxymethyltransferase (417 aa).

Residues L121 and 125–127 (GHL) each bind (6S)-5,6,7,8-tetrahydrofolate. K229 carries the post-translational modification N6-(pyridoxal phosphate)lysine. 355–357 (SPF) serves as a coordination point for (6S)-5,6,7,8-tetrahydrofolate.

Belongs to the SHMT family. Homodimer. Requires pyridoxal 5'-phosphate as cofactor.

It localises to the cytoplasm. It catalyses the reaction (6R)-5,10-methylene-5,6,7,8-tetrahydrofolate + glycine + H2O = (6S)-5,6,7,8-tetrahydrofolate + L-serine. The protein operates within one-carbon metabolism; tetrahydrofolate interconversion. Its pathway is amino-acid biosynthesis; glycine biosynthesis; glycine from L-serine: step 1/1. Its function is as follows. Catalyzes the reversible interconversion of serine and glycine with tetrahydrofolate (THF) serving as the one-carbon carrier. This reaction serves as the major source of one-carbon groups required for the biosynthesis of purines, thymidylate, methionine, and other important biomolecules. Also exhibits THF-independent aldolase activity toward beta-hydroxyamino acids, producing glycine and aldehydes, via a retro-aldol mechanism. The polypeptide is Serine hydroxymethyltransferase (Klebsiella pneumoniae subsp. pneumoniae (strain ATCC 700721 / MGH 78578)).